Reading from the N-terminus, the 121-residue chain is MEDIMQLPKARVNASMLPQYIDRPVCFVGKLEKIHPTGKMFILSDGEGKNGTIELMEPLDEEISGIVEVVGKVTAKATVLCASYTLFKEDTNRFDLELYNEAVKIINELPQFFPVGLPQHE.

Glycyl lysine isopeptide (Lys-Gly) (interchain with G-Cter in ubiquitin) cross-links involve residues Lys39 and Lys88.

The protein belongs to the replication factor A protein 3 family. As to quaternary structure, component of the canonical replication protein A complex (RPA), a heterotrimer composed of RPA1, RPA2 and RPA3. Also a component of the aRPA, the alternative replication protein A complex, a trimeric complex similar to the replication protein A complex/RPA but where RPA1 and RPA3 are associated with RPA4 instead of RPA2. In terms of processing, ubiquitinated by RFWD3 at stalled replication forks in response to DNA damage: ubiquitination by RFWD3 does not lead to degradation by the proteasome and promotes removal of the RPA complex from stalled replication forks, promoting homologous recombination.

Its subcellular location is the nucleus. In terms of biological role, as part of the heterotrimeric replication protein A complex (RPA/RP-A), binds and stabilizes single-stranded DNA intermediates, that form during DNA replication or upon DNA stress. It prevents their reannealing and in parallel, recruits and activates different proteins and complexes involved in DNA metabolism. Thereby, it plays an essential role both in DNA replication and the cellular response to DNA damage. In the cellular response to DNA damage, the RPA complex controls DNA repair and DNA damage checkpoint activation. Through recruitment of ATRIP activates the ATR kinase a master regulator of the DNA damage response. It is required for the recruitment of the DNA double-strand break repair factors RAD51 and RAD52 to chromatin, in response to DNA damage. Also recruits to sites of DNA damage proteins like XPA and XPG that are involved in nucleotide excision repair and is required for this mechanism of DNA repair. Also plays a role in base excision repair (BER), probably through interaction with UNG. Also recruits SMARCAL1/HARP, which is involved in replication fork restart, to sites of DNA damage. May also play a role in telomere maintenance. RPA3 has its own single-stranded DNA-binding activity and may be responsible for polarity of the binding of the complex to DNA. This Mus musculus (Mouse) protein is Replication protein A 14 kDa subunit (Rpa3).